The following is a 347-amino-acid chain: VIP36-like protein (347 aa).

The first 43 residues, 1-43, serve as a signal peptide directing secretion; sequence MAAASRPSWWQRWRRRAWARDGAKLLLFLLLLGSGPGPRHVRA. Topologically, residues 44-312 are lumenal; it reads GQAVEYLKRE…VPPTPLSGLA (269 aa). The L-type lectin-like domain occupies 48–273; it reads EYLKREHSLS…DVISLKLFEL (226 aa). Ser-92 and Asp-127 together coordinate a carbohydrate. Residues Asp-158, Tyr-160, and Asn-162 each contribute to the Ca(2+) site. 160-162 contacts a carbohydrate; sequence YPN. Asn-180 carries N-linked (GlcNAc...) asparagine glycosylation. A carbohydrate is bound at residue His-187. Asp-190 contributes to the Ca(2+) binding site. A disulfide bridge connects residues Cys-199 and Cys-236. Residue 257 to 259 participates in a carbohydrate binding; that stretch reads GDL. The chain crosses the membrane as a helical span at residues 313-335; sequence LFLIVFFSLVFSVFAIVIGIILY. At 336-347 the chain is on the cytoplasmic side; sequence NKWQDQSRKRFY. The Endoplasmic reticulum retention signal motif lies at 343–345; the sequence is RKR.

The protein resides in the endoplasmic reticulum membrane. It is found in the golgi apparatus membrane. Functionally, may be involved in the regulation of export from the endoplasmic reticulum of a subset of glycoproteins. May function as a regulator of ERGIC-53. The protein is VIP36-like protein (Lman2l) of Mus musculus (Mouse).